The primary structure comprises 128 residues: MAREFKRSDRVAQEIQKEIAVILQREVKDPRIGMVTVSDVEVSSDLSYAKIFVTFLFDHDETAIEQGMKGLEKASPYIRSLLGKAMRLRIVPEIRFIYDQSLVEGMRMSNLVTNVVREDEKKHVEESN.

Belongs to the RbfA family. Monomer. Binds 30S ribosomal subunits, but not 50S ribosomal subunits or 70S ribosomes.

Its subcellular location is the cytoplasm. Its function is as follows. One of several proteins that assist in the late maturation steps of the functional core of the 30S ribosomal subunit. Associates with free 30S ribosomal subunits (but not with 30S subunits that are part of 70S ribosomes or polysomes). Required for efficient processing of 16S rRNA. May interact with the 5'-terminal helix region of 16S rRNA. The protein is Ribosome-binding factor A of Haemophilus influenzae (strain 86-028NP).